Here is a 648-residue protein sequence, read N- to C-terminus: 1-deoxy-D-xylulose-5-phosphate synthase (648 aa).

Thiamine diphosphate-binding positions include His-73 and 114–116 (SHA). Asp-145 lines the Mg(2+) pocket. Thiamine diphosphate contacts are provided by residues 146-147 (GA), Asn-175, Tyr-286, and Glu-367. Residue Asn-175 coordinates Mg(2+).

It belongs to the transketolase family. DXPS subfamily. Homodimer. It depends on Mg(2+) as a cofactor. Requires thiamine diphosphate as cofactor.

The catalysed reaction is D-glyceraldehyde 3-phosphate + pyruvate + H(+) = 1-deoxy-D-xylulose 5-phosphate + CO2. The protein operates within metabolic intermediate biosynthesis; 1-deoxy-D-xylulose 5-phosphate biosynthesis; 1-deoxy-D-xylulose 5-phosphate from D-glyceraldehyde 3-phosphate and pyruvate: step 1/1. Catalyzes the acyloin condensation reaction between C atoms 2 and 3 of pyruvate and glyceraldehyde 3-phosphate to yield 1-deoxy-D-xylulose-5-phosphate (DXP). The chain is 1-deoxy-D-xylulose-5-phosphate synthase from Rhodococcus erythropolis (strain PR4 / NBRC 100887).